The chain runs to 368 residues: Peptide chain release factor 2 (368 aa).

Gln250 is subject to N5-methylglutamine.

The protein belongs to the prokaryotic/mitochondrial release factor family. Post-translationally, methylated by PrmC. Methylation increases the termination efficiency of RF2.

The protein localises to the cytoplasm. Functionally, peptide chain release factor 2 directs the termination of translation in response to the peptide chain termination codons UGA and UAA. In Chlamydia trachomatis serovar L2 (strain ATCC VR-902B / DSM 19102 / 434/Bu), this protein is Peptide chain release factor 2.